A 290-amino-acid polypeptide reads, in one-letter code: Ribonuclease HIII (290 aa).

The RNase H type-2 domain maps to 78-290 (LPLIGTDEVG…FKNTEKAKNA (213 aa)). The a divalent metal cation site is built by D84, E85, and D187.

It belongs to the RNase HII family. RnhC subfamily. Mn(2+) is required as a cofactor. Mg(2+) serves as cofactor.

Its subcellular location is the cytoplasm. The enzyme catalyses Endonucleolytic cleavage to 5'-phosphomonoester.. Its function is as follows. Endonuclease that specifically degrades the RNA of RNA-DNA hybrids. This Streptococcus pneumoniae serotype 2 (strain D39 / NCTC 7466) protein is Ribonuclease HIII.